Consider the following 356-residue polypeptide: tRNA N6-adenosine threonylcarbamoyltransferase (356 aa).

Fe cation contacts are provided by histidine 111 and histidine 115. Substrate-binding positions include 143–147, aspartate 178, glycine 191, aspartate 195, and asparagine 286; that span reads LASGG. Aspartate 314 serves as a coordination point for Fe cation.

It belongs to the KAE1 / TsaD family. Fe(2+) serves as cofactor.

The protein resides in the cytoplasm. The catalysed reaction is L-threonylcarbamoyladenylate + adenosine(37) in tRNA = N(6)-L-threonylcarbamoyladenosine(37) in tRNA + AMP + H(+). In terms of biological role, required for the formation of a threonylcarbamoyl group on adenosine at position 37 (t(6)A37) in tRNAs that read codons beginning with adenine. Is involved in the transfer of the threonylcarbamoyl moiety of threonylcarbamoyl-AMP (TC-AMP) to the N6 group of A37, together with TsaE and TsaB. TsaD likely plays a direct catalytic role in this reaction. The chain is tRNA N6-adenosine threonylcarbamoyltransferase from Sorangium cellulosum (strain So ce56) (Polyangium cellulosum (strain So ce56)).